The chain runs to 430 residues: Tyrosine--tRNA ligase (430 aa).

Tyr-32 lines the L-tyrosine pocket. The 'HIGH' region signature appears at Pro-37 to His-46. Residues Tyr-172 and Gln-176 each coordinate L-tyrosine. The short motif at Lys-232–Thr-236 is the 'KMSKS' region element. Lys-235 lines the ATP pocket. The S4 RNA-binding domain occupies Ile-362–Ala-429.

Belongs to the class-I aminoacyl-tRNA synthetase family. TyrS type 1 subfamily. Homodimer.

It is found in the cytoplasm. The catalysed reaction is tRNA(Tyr) + L-tyrosine + ATP = L-tyrosyl-tRNA(Tyr) + AMP + diphosphate + H(+). Functionally, catalyzes the attachment of tyrosine to tRNA(Tyr) in a two-step reaction: tyrosine is first activated by ATP to form Tyr-AMP and then transferred to the acceptor end of tRNA(Tyr). This Parabacteroides distasonis (strain ATCC 8503 / DSM 20701 / CIP 104284 / JCM 5825 / NCTC 11152) protein is Tyrosine--tRNA ligase.